The following is a 265-amino-acid chain: Translation initiation factor 2 subunit alpha (265 aa).

In terms of domain architecture, S1 motif spans 12–82 (GELVIGTVKK…KMRVVEVSLK (71 aa)).

It belongs to the eIF-2-alpha family. In terms of assembly, heterotrimer composed of an alpha, a beta and a gamma chain.

In terms of biological role, eIF-2 functions in the early steps of protein synthesis by forming a ternary complex with GTP and initiator tRNA. The protein is Translation initiation factor 2 subunit alpha of Pyrobaculum aerophilum (strain ATCC 51768 / DSM 7523 / JCM 9630 / CIP 104966 / NBRC 100827 / IM2).